The chain runs to 378 residues: Dihydroorotate dehydrogenase (quinone) (378 aa).

FMN-binding positions include 77 to 81 (AGFDK) and Thr101. Lys81 contributes to the substrate binding site. Residue 126-130 (NRMGF) participates in substrate binding. The FMN site is built by Asn158 and Asn191. Asn191 contributes to the substrate binding site. Ser194 acts as the Nucleophile in catalysis. A substrate-binding site is contributed by Asn196. FMN contacts are provided by Lys229 and Thr257. 258–259 (NT) contacts substrate. FMN is bound by residues Gly287, Gly316, and 337–338 (YT).

The protein belongs to the dihydroorotate dehydrogenase family. Type 2 subfamily. Monomer. It depends on FMN as a cofactor.

It localises to the cell membrane. It catalyses the reaction (S)-dihydroorotate + a quinone = orotate + a quinol. It functions in the pathway pyrimidine metabolism; UMP biosynthesis via de novo pathway; orotate from (S)-dihydroorotate (quinone route): step 1/1. In terms of biological role, catalyzes the conversion of dihydroorotate to orotate with quinone as electron acceptor. In Synechococcus sp. (strain ATCC 27144 / PCC 6301 / SAUG 1402/1) (Anacystis nidulans), this protein is Dihydroorotate dehydrogenase (quinone).